Consider the following 207-residue polypeptide: Ribosomal RNA large subunit methyltransferase E (207 aa).

Gly-60, Trp-62, Asp-80, Asp-96, and Asp-121 together coordinate S-adenosyl-L-methionine. Residue Lys-161 is the Proton acceptor of the active site.

Belongs to the class I-like SAM-binding methyltransferase superfamily. RNA methyltransferase RlmE family.

It is found in the cytoplasm. It carries out the reaction uridine(2552) in 23S rRNA + S-adenosyl-L-methionine = 2'-O-methyluridine(2552) in 23S rRNA + S-adenosyl-L-homocysteine + H(+). In terms of biological role, specifically methylates the uridine in position 2552 of 23S rRNA at the 2'-O position of the ribose in the fully assembled 50S ribosomal subunit. The protein is Ribosomal RNA large subunit methyltransferase E of Pseudomonas paraeruginosa (strain DSM 24068 / PA7) (Pseudomonas aeruginosa (strain PA7)).